Reading from the N-terminus, the 196-residue chain is Probable GTP-binding protein EngB (196 aa).

Residues 22–195 (NIPEIALVGR…WQWIEERMGK (174 aa)) form the EngB-type G domain. GTP contacts are provided by residues 30–37 (GRSNVGKS), 57–61 (GKTQT), 75–78 (DVPG), 142–145 (TKID), and 174–176 (FSA). Mg(2+) contacts are provided by Ser-37 and Thr-59.

Belongs to the TRAFAC class TrmE-Era-EngA-EngB-Septin-like GTPase superfamily. EngB GTPase family. Mg(2+) is required as a cofactor.

Functionally, necessary for normal cell division and for the maintenance of normal septation. This is Probable GTP-binding protein EngB from Limosilactobacillus reuteri (strain DSM 20016) (Lactobacillus reuteri).